We begin with the raw amino-acid sequence, 538 residues long: Chaperonin GroEL (538 aa).

Residues 29-32, 86-90, Gly-413, 476-478, and Asp-492 contribute to the ATP site; these read TIGP, DGTTT, and NAA.

Belongs to the chaperonin (HSP60) family. Forms a cylinder of 14 subunits composed of two heptameric rings stacked back-to-back. Interacts with the co-chaperonin GroES.

The protein localises to the cytoplasm. It catalyses the reaction ATP + H2O + a folded polypeptide = ADP + phosphate + an unfolded polypeptide.. Functionally, together with its co-chaperonin GroES, plays an essential role in assisting protein folding. The GroEL-GroES system forms a nano-cage that allows encapsulation of the non-native substrate proteins and provides a physical environment optimized to promote and accelerate protein folding. The chain is Chaperonin GroEL from Staphylococcus aureus (strain USA300).